A 282-amino-acid chain; its full sequence is HTH-type transcriptional activator RhaR (282 aa).

One can recognise an HTH araC/xylS-type domain in the interval 179–277 (DKLITALAGS…GMTPVQWRHR (99 aa)). 2 DNA-binding regions (H-T-H motif) span residues 196-217 (EKFC…RTQT) and 244-267 (VSEV…NREV).

As to quaternary structure, binds DNA as a dimer.

The protein resides in the cytoplasm. Activates expression of the rhaSR operon in response to L-rhamnose. This is HTH-type transcriptional activator RhaR from Enterobacter sp. (strain 638).